The primary structure comprises 358 residues: Isopentenyl-diphosphate delta-isomerase (358 aa).

Substrate is bound at residue 12–13 (RK). FMN contacts are provided by residues 69–71 (AMT), serine 99, and asparagine 128. Glutamine 158 serves as a coordination point for substrate. Glutamate 159 is a binding site for Mg(2+). FMN-binding positions include lysine 190, threonine 220, 267–269 (GIR), and 288–289 (AG).

Belongs to the IPP isomerase type 2 family. In terms of assembly, homooctamer. Dimer of tetramers. It depends on FMN as a cofactor. NADPH is required as a cofactor. The cofactor is Mg(2+).

Its subcellular location is the cytoplasm. It carries out the reaction isopentenyl diphosphate = dimethylallyl diphosphate. Its function is as follows. Involved in the biosynthesis of isoprenoids. Catalyzes the 1,3-allylic rearrangement of the homoallylic substrate isopentenyl (IPP) to its allylic isomer, dimethylallyl diphosphate (DMAPP). This is Isopentenyl-diphosphate delta-isomerase from Listeria monocytogenes serovar 1/2a (strain ATCC BAA-679 / EGD-e).